The following is a 427-amino-acid chain: Gamma-glutamyl phosphate reductase (427 aa).

Belongs to the gamma-glutamyl phosphate reductase family.

Its subcellular location is the cytoplasm. The enzyme catalyses L-glutamate 5-semialdehyde + phosphate + NADP(+) = L-glutamyl 5-phosphate + NADPH + H(+). Its pathway is amino-acid biosynthesis; L-proline biosynthesis; L-glutamate 5-semialdehyde from L-glutamate: step 2/2. Catalyzes the NADPH-dependent reduction of L-glutamate 5-phosphate into L-glutamate 5-semialdehyde and phosphate. The product spontaneously undergoes cyclization to form 1-pyrroline-5-carboxylate. The chain is Gamma-glutamyl phosphate reductase from Anaeromyxobacter sp. (strain K).